A 680-amino-acid chain; its full sequence is Translation factor GUF1 homolog, chloroplastic (680 aa).

Residues 1–51 (MATATASRLAVPAPRTSPQAPGRRRPAAPLPSAPPRPRALSAAPRGRVVCP) constitute a chloroplast transit peptide. The interval 1-68 (MATATASRLA…ASTTDAGQDR (68 aa)) is disordered. Over residues 28–37 (APLPSAPPRP) the composition is skewed to pro residues. Low complexity predominate over residues 38–60 (RALSAAPRGRVVCPAAPASSPAS). One can recognise a tr-type G domain in the interval 75 to 256 (SNIRNFSIIA…AIVTKIPPPQ (182 aa)). Residues 84–91 (AHIDHGKS), 149–153 (DTPGH), and 203–206 (NKID) contribute to the GTP site.

The protein belongs to the TRAFAC class translation factor GTPase superfamily. Classic translation factor GTPase family. LepA subfamily.

The protein localises to the plastid. Its subcellular location is the chloroplast. It carries out the reaction GTP + H2O = GDP + phosphate + H(+). Its function is as follows. Promotes chloroplast protein synthesis. May act as a fidelity factor of the translation reaction, by catalyzing a one-codon backward translocation of tRNAs on improperly translocated ribosomes. The polypeptide is Translation factor GUF1 homolog, chloroplastic (Oryza sativa subsp. japonica (Rice)).